A 237-amino-acid chain; its full sequence is Ribonuclease PH (237 aa).

Phosphate-binding positions include Arg86 and 124–126 (GTR).

It belongs to the RNase PH family. As to quaternary structure, homohexameric ring arranged as a trimer of dimers.

The catalysed reaction is tRNA(n+1) + phosphate = tRNA(n) + a ribonucleoside 5'-diphosphate. Its function is as follows. Phosphorolytic 3'-5' exoribonuclease that plays an important role in tRNA 3'-end maturation. Removes nucleotide residues following the 3'-CCA terminus of tRNAs; can also add nucleotides to the ends of RNA molecules by using nucleoside diphosphates as substrates, but this may not be physiologically important. Probably plays a role in initiation of 16S rRNA degradation (leading to ribosome degradation) during starvation. The protein is Ribonuclease PH of Shewanella pealeana (strain ATCC 700345 / ANG-SQ1).